Here is a 2145-residue protein sequence, read N- to C-terminus: Glutamate synthase [NADH] (2145 aa).

A propeptide spanning residues Met-1–Ala-53 is cleaved from the precursor. Cys-54 serves as the catalytic For GATase activity. The Glutamine amidotransferase type-2 domain maps to Cys-54–Gln-455. Leu-1132 to Arg-1189 serves as a coordination point for FMN. [3Fe-4S] cluster-binding residues include Cys-1185, Cys-1191, and Cys-1196. Residues Lys-1551 to Glu-1600 are a coiled coil. Residue Gly-1928–Arg-1942 coordinates NAD(+). Thr-2070 carries the post-translational modification Phosphothreonine.

Belongs to the glutamate synthase family. In terms of assembly, homotrimer. The cofactor is [3Fe-4S] cluster. Requires FAD as cofactor. FMN is required as a cofactor.

It catalyses the reaction 2 L-glutamate + NAD(+) = L-glutamine + 2-oxoglutarate + NADH + H(+). It participates in amino-acid biosynthesis; L-glutamate biosynthesis via GLT pathway; L-glutamate from 2-oxoglutarate and L-glutamine (NAD(+) route): step 1/1. It functions in the pathway energy metabolism; nitrogen metabolism. Its activity is regulated as follows. Inhibited by homocysteine sulfonamide. In terms of biological role, forms L-glutamate from L-glutamine and 2-oxoglutarate. Represents an alternative pathway to L-glutamate dehydrogenase for the biosynthesis of L-glutamate. Participates with glutamine synthetase in ammonia assimilation processes. The enzyme is specific for NADH, L-glutamine and 2-oxoglutarate. The sequence is that of Glutamate synthase [NADH] (GLT1) from Saccharomyces cerevisiae (strain ATCC 204508 / S288c) (Baker's yeast).